The primary structure comprises 193 residues: Hypoxanthine/guanine phosphoribosyltransferase (193 aa).

It belongs to the purine/pyrimidine phosphoribosyltransferase family. Archaeal HPRT subfamily. Homodimer.

It is found in the cytoplasm. It carries out the reaction IMP + diphosphate = hypoxanthine + 5-phospho-alpha-D-ribose 1-diphosphate. The enzyme catalyses GMP + diphosphate = guanine + 5-phospho-alpha-D-ribose 1-diphosphate. It functions in the pathway purine metabolism; IMP biosynthesis via salvage pathway; IMP from hypoxanthine: step 1/1. Its function is as follows. Catalyzes a salvage reaction resulting in the formation of IMP that is energically less costly than de novo synthesis. Prefers hypoxanthine, has 66% activity with guanine while activity with adenine, xanthine, uracil, orotate, or cytosine is negligible. This chain is Hypoxanthine/guanine phosphoribosyltransferase, found in Methanothermobacter marburgensis (strain ATCC BAA-927 / DSM 2133 / JCM 14651 / NBRC 100331 / OCM 82 / Marburg) (Methanobacterium thermoautotrophicum).